Consider the following 217-residue polypeptide: MGQKVHPIGMRVGIIRDWDAKWYAEKEYADYLHEDLAIRNFIKKELADASTSTIEIERAVNKVIVSIHTAKPGMVIGKAGSNVDALRAQLNKLTGKQVHINIIEIKQPDLDAHLVGESIARQLEQRVAFRRAQKQAIQRAMRAGAKGIKTQVSGRLNGADIARAEGYSEGTVPLHTLRADIDYAWEEALTTYGKLGVKVWIYRGEVLPARKNTKGGK.

Positions Ile38–Lys106 constitute a KH type-2 domain.

It belongs to the universal ribosomal protein uS3 family. Part of the 30S ribosomal subunit. Forms a tight complex with proteins S10 and S14.

In terms of biological role, binds the lower part of the 30S subunit head. Binds mRNA in the 70S ribosome, positioning it for translation. The sequence is that of Small ribosomal subunit protein uS3 from Streptococcus suis (strain 98HAH33).